The following is a 439-amino-acid chain: Testican-1 (439 aa).

Positions 1 to 21 are cleaved as a signal peptide; the sequence is MPAIAVLAAAAAAWCFLQVES. 5 disulfides stabilise this stretch: C86-C97, C91-C107, C136-C166, C139-C159, and C148-C180. Residues 130–182 enclose the Kazal-like domain; that stretch reads PSNLVKCKPCPVAQSAMVCGSDGHSYTSKCKLEFHACSTGKSLATLCDGPCPC. An O-linked (GalNAc...) threonine glycan is attached at T228. A Thyroglobulin type-1 domain is found at 310 to 376; sequence GLPCQNEMNR…GSRKQGAVSC (67 aa). 3 disulfides stabilise this stretch: C313–C337, C348–C355, and C357–C376. S383 and S388 each carry an O-linked (Xyl...) (glycosaminoglycan) serine glycan. The interval 415-439 is disordered; sequence VHTRAVTEDDEDEDDDKEDEVGYIW. Residues 422–439 are compositionally biased toward acidic residues; that stretch reads EDDEDEDDDKEDEVGYIW.

Post-translationally, O-glycosylated. Glycosaminoglycan that contains chondroitin sulfate and heparan sulfate.

The protein resides in the secreted. It localises to the extracellular space. It is found in the extracellular matrix. In terms of biological role, may play a role in cell-cell and cell-matrix interactions. May contribute to various neuronal mechanisms in the central nervous system. This is Testican-1 (SPOCK1) from Homo sapiens (Human).